The following is a 496-amino-acid chain: Fizzy-related protein homolog (496 aa).

Disordered regions lie at residues 28 to 51 (RRTL…FIPS), 64 to 88 (INEN…GKDG), and 105 to 166 (EKVQ…SPRK). Position 32 is a phosphothreonine (T32). Polar residues predominate over residues 32 to 42 (TPASSPVSSPS). A Phosphoserine modification is found at S36. Positions 47–52 (RFIPSR) are involved in APC/FZR1 E3 ubiquitin-protein ligase complex activity. At K69 the chain carries N6-acetyllysine. Composition is skewed to basic and acidic residues over residues 76-86 (KAKDATSDNGK) and 106-126 (KVQD…EKKG). S133, S138, S146, and S151 each carry phosphoserine. Residues 146 to 160 (SPYSLSPVSNKSQKL) are compositionally biased toward polar residues. K159 carries the post-translational modification N6-acetyllysine. WD repeat units follow at residues 182-222 (PELQ…VTRL), 227-266 (VEGD…KLSM), 269-306 (GHTA…LQSE), 311-350 (GHRQ…PVQQ), 353-395 (EHLA…PLQC), 397-438 (DTGS…QVAK), and 441-480 (GHSY…RSTK).

The protein belongs to the WD repeat CDC20/Fizzy family. The unphosphorylated form interacts with APC/C during mitosis. Interacts with NINL. Interacts (in complex with the anaphase promoting complex APC) with MAD2L2; inhibits FZR1-mediated APC/C activation. Interacts with SIRT2 and USP37. Interacts (via WD repeats) with MAK. Interacts with RBBP8/CtIP; this interaction leads to RBBP8 proteasomal degradation. Interacts with HECW2. Interacts with SASS6; the interaction is regulated by CENATAC and leads to SASS6 proteasomal degradation. Interacts (via N-terminus) with CCNF. Interacts with CDC6. Interacts with TK1 (via the KEN box). Acetylated. Deacetylated by SIRT2 at Lys-69 and Lys-159; deacetylation enhances the interaction of FZR1 with CDC27, leading to activation of anaphase promoting complex/cyclosome (APC/C). In terms of processing, following DNA damage, it is dephosphorylated by CDC14B in G2 phase, leading to its reassociation with the APC/C, and allowing an efficient G2 DNA damage checkpoint. Phosphorylated by MAK. Post-translationally, ubiquitinated by the SCF(CCNF) E3 ubiquitin-protein ligase complex; leading to its degradation by the proteasome. In terms of tissue distribution, isoform 2 is expressed at high levels in heart, liver, spleen and some cancer cell lines whereas isoform 3 is expressed only at low levels in these tissues.

Its subcellular location is the nucleus. The protein resides in the cytoplasm. It participates in protein modification; protein ubiquitination. Substrate-specific adapter for the anaphase promoting complex/cyclosome (APC/C) E3 ubiquitin-protein ligase complex. Associates with the APC/C in late mitosis, in replacement of CDC20, and activates the APC/C during anaphase and telophase. The APC/C remains active in degrading substrates to ensure that positive regulators of the cell cycle do not accumulate prematurely. At the G1/S transition FZR1 is phosphorylated, leading to its dissociation from the APC/C. Following DNA damage, it is required for the G2 DNA damage checkpoint: its dephosphorylation and reassociation with the APC/C leads to the ubiquitination of PLK1, preventing entry into mitosis. Acts as an adapter for APC/C to target the DNA-end resection factor RBBP8/CtIP for ubiquitination and subsequent proteasomal degradation. Through the regulation of RBBP8/CtIP protein turnover, may play a role in DNA damage response, favoring DNA double-strand repair through error-prone non-homologous end joining (NHEJ) over error-free, RBBP8-mediated homologous recombination (HR). This is Fizzy-related protein homolog from Homo sapiens (Human).